A 619-amino-acid chain; its full sequence is Chaperone protein HscA homolog (619 aa).

It belongs to the heat shock protein 70 family.

Chaperone involved in the maturation of iron-sulfur cluster-containing proteins. Has a low intrinsic ATPase activity which is markedly stimulated by HscB. This chain is Chaperone protein HscA homolog, found in Acinetobacter baumannii (strain AB0057).